The chain runs to 1342 residues: DNA-directed RNA polymerase subunit beta (1342 aa).

This sequence belongs to the RNA polymerase beta chain family. As to quaternary structure, the RNAP catalytic core consists of 2 alpha, 1 beta, 1 beta' and 1 omega subunit. When a sigma factor is associated with the core the holoenzyme is formed, which can initiate transcription.

It catalyses the reaction RNA(n) + a ribonucleoside 5'-triphosphate = RNA(n+1) + diphosphate. Its function is as follows. DNA-dependent RNA polymerase catalyzes the transcription of DNA into RNA using the four ribonucleoside triphosphates as substrates. The protein is DNA-directed RNA polymerase subunit beta of Enterobacter sp. (strain 638).